Here is a 394-residue protein sequence, read N- to C-terminus: GTPase Era, mitochondrial (394 aa).

One can recognise an Era-type G domain in the interval 32-280 (KCLQLAVIGA…RDHLMSISPQ (249 aa)). A G1 region spans residues 40 to 47 (GAPNVGKS). 40-47 (GAPNVGKS) contacts GTP. Residues 66-70 (DTTTR) form a G2 region. The tract at residues 87-90 (DSPG) is G3. Residues 87-91 (DSPGA) and 160-163 (NKID) each bind GTP. The segment at 160–163 (NKID) is G4. The interval 259-261 (VSS) is G5.

Belongs to the TRAFAC class TrmE-Era-EngA-EngB-Septin-like GTPase superfamily. Era GTPase family.

It localises to the mitochondrion matrix. The protein localises to the mitochondrion inner membrane. Probable GTPase that plays a role in the mitochondrial ribosomal small subunit assembly. Specifically binds the 12S mitochondrial rRNA (12S mt-rRNA) to a 33 nucleotide section delineating the 3' terminal stem-loop region. May act as a chaperone that protects the 12S mt-rRNA on the 28S mitoribosomal subunit during ribosomal small subunit assembly. May play a role in positively regulating mitochondrial function. Plays a role in fertility. The chain is GTPase Era, mitochondrial from Caenorhabditis elegans.